The sequence spans 135 residues: Large ribosomal subunit protein uL16c (135 aa).

Belongs to the universal ribosomal protein uL16 family. As to quaternary structure, part of the 50S ribosomal subunit.

The protein localises to the plastid. It localises to the chloroplast. This Coffea arabica (Arabian coffee) protein is Large ribosomal subunit protein uL16c.